Here is a 281-residue protein sequence, read N- to C-terminus: Insulin-like growth factor-binding protein 2 (281 aa).

Positions 1-21 are cleaved as a signal peptide; sequence MVLSEHLLVLLGAVLCAPALS. Residues 23–106 enclose the IGFBP N-terminal domain; sequence VLFRCPPCSP…VLGLGTCGKR (84 aa). Cystine bridges form between Cys-27/Cys-56, Cys-30/Cys-58, Cys-38/Cys-59, Cys-47/Cys-62, Cys-70/Cys-83, and Cys-77/Cys-103. Disordered regions lie at residues 107 to 127 and 139 to 180; these read RDAE…DQSD and PAVP…RPAR. The span at 156-176 shows a compositional bias: basic and acidic residues; sequence VNRERANEQHRSKTNKSEDKK. Residues 180 to 262 enclose the Thyroglobulin type-1 domain; the sequence is RSLCQLQLDQ…SPTVRGDPEC (83 aa). 3 disulfides stabilise this stretch: Cys-183-Cys-217, Cys-228-Cys-239, and Cys-241-Cys-262. The short motif at 257 to 259 is the Cell attachment site element; it reads RGD.

As to quaternary structure, interacts with igf1 and igf2.

It localises to the secreted. In terms of biological role, IGF-binding proteins prolong the half-life of the IGFs and have been shown to either inhibit or stimulate the growth promoting effects of the IGFs on cell culture. They alter the interaction of IGFs with their cell surface receptors. In Xenopus laevis (African clawed frog), this protein is Insulin-like growth factor-binding protein 2 (igfbp2).